Reading from the N-terminus, the 878-residue chain is Lon protease 2 (878 aa).

The region spanning 85-281 is the Lon N-terminal domain; sequence LYLLPVKERP…KVLSLFKHEI (197 aa). 434 to 441 contacts ATP; that stretch reads GPPGVGKT. Residues 668 to 850 enclose the Lon proteolytic domain; the sequence is NQQMGTVTGL…DDVAKLTFHI (183 aa). Residues serine 756 and lysine 799 contribute to the active site.

This sequence belongs to the peptidase S16 family. As to quaternary structure, homohexamer. Organized in a ring with a central cavity.

Its subcellular location is the cytoplasm. It catalyses the reaction Hydrolysis of proteins in presence of ATP.. ATP-dependent serine protease that mediates the selective degradation of mutant and abnormal proteins as well as certain short-lived regulatory proteins. Required for cellular homeostasis and for survival from DNA damage and developmental changes induced by stress. Degrades polypeptides processively to yield small peptide fragments that are 5 to 10 amino acids long. Binds to DNA in a double-stranded, site-specific manner. This Hydrogenovibrio crunogenus (strain DSM 25203 / XCL-2) (Thiomicrospira crunogena) protein is Lon protease 2.